The chain runs to 368 residues: Germination protease (368 aa).

A propeptide spanning residues Met-1–Asp-16 is cleaved from the precursor.

Belongs to the peptidase A25 family. Homotetramer. Autoproteolytically processed. The inactive tetrameric zymogen termed p46 autoprocesses to a smaller form termed p41, which is active only during spore germination.

The catalysed reaction is Endopeptidase action with P4 Glu or Asp, P1 preferably Glu &gt; Asp, P1' hydrophobic and P2' Ala.. Initiates the rapid degradation of small, acid-soluble proteins during spore germination. The protein is Germination protease of Bacillus licheniformis (strain ATCC 14580 / DSM 13 / JCM 2505 / CCUG 7422 / NBRC 12200 / NCIMB 9375 / NCTC 10341 / NRRL NRS-1264 / Gibson 46).